The chain runs to 135 residues: uncharacterized protein (135 aa).

This is an uncharacterized protein from Schizosaccharomyces pombe (strain 972 / ATCC 24843) (Fission yeast).